The chain runs to 295 residues: Diaminopimelate epimerase (295 aa).

Positions 13 and 69 each coordinate substrate. Cys-78 (proton donor) is an active-site residue. Substrate is bound by residues 79–80, Asn-173, Asn-212, and 230–231; these read GN and ER. Cys-239 acts as the Proton acceptor in catalysis. Position 240–241 (240–241) interacts with substrate; that stretch reads GT.

Belongs to the diaminopimelate epimerase family. Homodimer.

It localises to the cytoplasm. The enzyme catalyses (2S,6S)-2,6-diaminopimelate = meso-2,6-diaminopimelate. It functions in the pathway amino-acid biosynthesis; L-lysine biosynthesis via DAP pathway; DL-2,6-diaminopimelate from LL-2,6-diaminopimelate: step 1/1. Its function is as follows. Catalyzes the stereoinversion of LL-2,6-diaminopimelate (L,L-DAP) to meso-diaminopimelate (meso-DAP), a precursor of L-lysine. This chain is Diaminopimelate epimerase, found in Methanococcus aeolicus (strain ATCC BAA-1280 / DSM 17508 / OCM 812 / Nankai-3).